Consider the following 1060-residue polypeptide: Carbamoyl phosphate synthase large chain (1060 aa).

The segment at 1 to 401 (MPKRTDIRKI…SLLKACRSLE (401 aa)) is carboxyphosphate synthetic domain. The ATP site is built by R129, R169, G175, G176, R208, I210, E215, G241, I242, H243, Q284, and E298. The 195-residue stretch at 133-327 (KQLMEELNQP…IAKLAAKIAV (195 aa)) folds into the ATP-grasp 1 domain. Positions 284, 298, and 300 each coordinate Mg(2+). Residues Q284, E298, and N300 each contribute to the Mn(2+) site. Residues 402 to 546 (IGVDHIKIAD…YSTYAVENES (145 aa)) form an oligomerization domain region. A carbamoyl phosphate synthetic domain region spans residues 547 to 929 (LISDKASILV…ALYKAFEAAY (383 aa)). The ATP-grasp 2 domain occupies 671–861 (EATLQALNIP…MAQVATKVIL (191 aa)). The ATP site is built by R707, A746, L748, E752, G777, V778, H779, S780, Q820, and E832. Mg(2+) contacts are provided by Q820, E832, and N834. Mn(2+) is bound by residues Q820, E832, and N834. The MGS-like domain maps to 930–1060 (LHMPDYGNIV…SRAFTLKVLD (131 aa)). Positions 930–1060 (LHMPDYGNIV…SRAFTLKVLD (131 aa)) are allosteric domain.

Belongs to the CarB family. In terms of assembly, composed of two chains; the small (or glutamine) chain promotes the hydrolysis of glutamine to ammonia, which is used by the large (or ammonia) chain to synthesize carbamoyl phosphate. Tetramer of heterodimers (alpha,beta)4. Requires Mg(2+) as cofactor. Mn(2+) serves as cofactor.

It carries out the reaction hydrogencarbonate + L-glutamine + 2 ATP + H2O = carbamoyl phosphate + L-glutamate + 2 ADP + phosphate + 2 H(+). The enzyme catalyses hydrogencarbonate + NH4(+) + 2 ATP = carbamoyl phosphate + 2 ADP + phosphate + 2 H(+). It functions in the pathway amino-acid biosynthesis; L-arginine biosynthesis; carbamoyl phosphate from bicarbonate: step 1/1. Its pathway is pyrimidine metabolism; UMP biosynthesis via de novo pathway; (S)-dihydroorotate from bicarbonate: step 1/3. Its function is as follows. Large subunit of the glutamine-dependent carbamoyl phosphate synthetase (CPSase). CPSase catalyzes the formation of carbamoyl phosphate from the ammonia moiety of glutamine, carbonate, and phosphate donated by ATP, constituting the first step of 2 biosynthetic pathways, one leading to arginine and/or urea and the other to pyrimidine nucleotides. The large subunit (synthetase) binds the substrates ammonia (free or transferred from glutamine from the small subunit), hydrogencarbonate and ATP and carries out an ATP-coupled ligase reaction, activating hydrogencarbonate by forming carboxy phosphate which reacts with ammonia to form carbamoyl phosphate. The chain is Carbamoyl phosphate synthase large chain from Streptococcus agalactiae serotype Ia (strain ATCC 27591 / A909 / CDC SS700).